An 86-amino-acid chain; its full sequence is Neurotoxin LmNaTx1 (86 aa).

The signal sequence occupies residues 1 to 18; that stretch reads MKILIIFVIAITVVGVQS. Residues 19–85 enclose the LCN-type CS-alpha/beta domain; it reads KDGYPIYSTG…VWTYAENTCG (67 aa). 4 disulfide bridges follow: C33-C84, C37-C58, C44-C65, and C48-C67. Residue C84 is modified to Cysteine amide.

This sequence belongs to the long (4 C-C) scorpion toxin superfamily. Sodium channel inhibitor family. Beta subfamily. Expressed by the venom gland.

It is found in the secreted. Functionally, binds voltage-independently at site-4 of sodium channels (Nav) and shift the voltage of activation toward more negative potentials thereby affecting sodium channel activation and promoting spontaneous and repetitive firing. In Lychas mucronatus (Chinese swimming scorpion), this protein is Neurotoxin LmNaTx1.